We begin with the raw amino-acid sequence, 279 residues long: Urease accessory protein UreD (279 aa).

This sequence belongs to the UreD family. As to quaternary structure, ureD, UreF and UreG form a complex that acts as a GTP-hydrolysis-dependent molecular chaperone, activating the urease apoprotein by helping to assemble the nickel containing metallocenter of UreC. The UreE protein probably delivers the nickel.

It is found in the cytoplasm. Functionally, required for maturation of urease via the functional incorporation of the urease nickel metallocenter. This is Urease accessory protein UreD from Streptococcus salivarius (strain 57.I).